The sequence spans 288 residues: HTH-type transcriptional regulator CzcR (288 aa).

In terms of domain architecture, HTH lysR-type spans 1–58 (MELRDLQIFQSVADQGSVSSAAKELNYVQSNVTTRIKQLENELKTPLFYRHKRGMTLT). The segment at residues 18–37 (VSSAAKELNYVQSNVTTRIK) is a DNA-binding region (H-T-H motif).

The protein belongs to the LysR transcriptional regulatory family.

This is HTH-type transcriptional regulator CzcR (czcR) from Bacillus thuringiensis subsp. konkukian (strain 97-27).